We begin with the raw amino-acid sequence, 453 residues long: Verruculogen prenyltransferase (453 aa).

Glu-89 serves as a coordination point for substrate. Residues Arg-102, Lys-194, Tyr-196, Lys-273, Tyr-275, Tyr-378, Tyr-443, and Tyr-447 each coordinate dimethylallyl diphosphate.

This sequence belongs to the tryptophan dimethylallyltransferase family.

It catalyses the reaction verruculogen + dimethylallyl diphosphate = fumitremorgin A + diphosphate. It functions in the pathway mycotoxin biosynthesis. In terms of biological role, verruculogen prenyltransferase; part of the gene cluster that mediates the biosynthesis of fumitremorgins, indole alkaloids that carry not only intriguing chemical structures, but also interesting biological and pharmacological activities. The biosynthesis of fumitremorgin-type alkaloids begins by condensation of the two amino acids L-tryptophan and L-proline to brevianamide F, catalyzed by the non-ribosomal peptide synthetase ftmPS/ftmA. Brevianamide F is then prenylated by the prenyltransferase ftmPT1/ftmB in the presence of dimethylallyl diphosphate, resulting in the formation of tryprostatin B. The three cytochrome P450 monooxygenases, ftmP450-1/ftmC, ftmP450-2/ftmE and ftmP450-3/FtmG, are responsible for the conversion of tryprostatin B to 6-hydroxytryprostatin B, tryprostatin A to fumitremorgin C and fumitremorgin C to 12,13-dihydroxyfumitremorgin C, respectively. The putative methyltransferase ftmMT/ftmD is expected for the conversion of 6-hydroxytryprostatin B to tryprostatin A. FtmPT2/FtmH catalyzes the prenylation of 12,13-dihydroxyfumitre-morgin C in the presence of dimethylallyl diphosphate, resulting in the formation of fumitremorgin B. Fumitremorgin B is further converted to verruculogen by ftmOx1/ftmF via the insertion of an endoperoxide bond between the two prenyl moieties. Finally, verruculogen is further converted to fumitremorgin A by the verruculogen prenyltransferase ftmPT3. The polypeptide is Verruculogen prenyltransferase (Neosartorya fischeri (strain ATCC 1020 / DSM 3700 / CBS 544.65 / FGSC A1164 / JCM 1740 / NRRL 181 / WB 181) (Aspergillus fischerianus)).